The primary structure comprises 857 residues: RNA-directed RNA polymerase 2a (857 aa).

Residues 511–624 (KYCLEIDLSK…FSLLPPVGDP (114 aa)) form the RdRp catalytic domain. A disordered region spans residues 785–857 (DDKRRTPTGS…PRERGGVTRA (73 aa)). 2 stretches are compositionally biased toward polar residues: residues 804-816 (KVSQTKSTGTRSQ) and 824-840 (FKSQTVPLPTVLSSGWS). The segment covering 846 to 857 (VPPRERGGVTRA) has biased composition (basic and acidic residues).

The protein belongs to the ssRNA positive-strand viruses RNA-directed RNA polymerase family. In terms of assembly, interacts with replication protein 1a.

It carries out the reaction RNA(n) + a ribonucleoside 5'-triphosphate = RNA(n+1) + diphosphate. In terms of biological role, RNA-dependent RNA polymerase which replicates the viral genome composed of 3 RNA segments, RNA1, RNA2 and RNA3. This chain is RNA-directed RNA polymerase 2a, found in Cucumis sativus (Cucumber).